A 345-amino-acid polypeptide reads, in one-letter code: Calcium/calmodulin-dependent protein kinase type 1 (345 aa).

The segment at 1–23 is disordered; sequence MPLFGSKKETAKKSSKKDKDEGK. Residues 31–287 enclose the Protein kinase domain; that stretch reads YILKDLLGTG…CKQALGHPWI (257 aa). ATP contacts are provided by residues 37-45 and lysine 61; that span reads LGTGAFSQV. Aspartate 153 (proton acceptor) is an active-site residue. An autoinhibitory domain region spans residues 287–327; it reads ISGNAASTENIHSSVSEQLKKNFAKSRWRQAYHATAVIRQM. Residues 307 to 328 are calmodulin-binding; that stretch reads KNFAKSRWRQAYHATAVIRQMR.

The protein belongs to the protein kinase superfamily. CAMK Ser/Thr protein kinase family. CaMK subfamily. In terms of tissue distribution, highly expressed in hepatopancreas and to a lesser extent in gills. Low expression in hemocytes, testis, ovary, heart, eyestalk, muscle and epidermis.

The enzyme catalyses L-seryl-[protein] + ATP = O-phospho-L-seryl-[protein] + ADP + H(+). It catalyses the reaction L-threonyl-[protein] + ATP = O-phospho-L-threonyl-[protein] + ADP + H(+). Its activity is regulated as follows. Activated by Ca(2+)/calmodulin. Binding of calmodulin results in conformational change that relieves intrasteric autoinhibition. Its function is as follows. Calcium/calmodulin-dependent protein kinase that operates in the calcium-triggered CaMKK-CaMK1 signaling cascade and, upon calcium influx, regulates transcription activators activity, cell cycle, hormone production, cell differentiation, actin filament organization and neurite outgrowth. Involved in molting. This chain is Calcium/calmodulin-dependent protein kinase type 1, found in Macrobrachium nipponense (Oriental river shrimp).